Here is a 204-residue protein sequence, read N- to C-terminus: Urease accessory protein UreG 1 (204 aa).

14 to 21 (GPVGSGKT) contributes to the GTP binding site.

It belongs to the SIMIBI class G3E GTPase family. UreG subfamily. Homodimer. UreD, UreF and UreG form a complex that acts as a GTP-hydrolysis-dependent molecular chaperone, activating the urease apoprotein by helping to assemble the nickel containing metallocenter of UreC. The UreE protein probably delivers the nickel.

The protein localises to the cytoplasm. In terms of biological role, facilitates the functional incorporation of the urease nickel metallocenter. This process requires GTP hydrolysis, probably effectuated by UreG. This chain is Urease accessory protein UreG 1, found in Methylorubrum populi (strain ATCC BAA-705 / NCIMB 13946 / BJ001) (Methylobacterium populi).